A 256-amino-acid polypeptide reads, in one-letter code: Doublecortin domain-containing protein (256 aa).

Positions 71-103 (NVFERLTDTAYYTGSHRERFDEFGNGRGIAGRE) are partial p25alpha domain. The region spanning 152-226 (RLMWLYRNGD…AKYLCTSGEP (75 aa)) is the Doublecortin domain.

The protein resides in the cytoplasm. The protein localises to the cytoskeleton. Specifically required in the formation and maintenance of the conoid fibers; the conoid is a component of the cytoskeletal apical complex, which is composed of a left-handed spiral of 14 fibers made from a nontubular tubulin polymer. Promotes the organization, curvature, and stability of the conoid fibers, and probably bridges other conoid components to the tubulin core. The sequence is that of Doublecortin domain-containing protein from Toxoplasma gondii (strain ATCC 50861 / VEG).